The primary structure comprises 238 residues: Ribosomal RNA large subunit methyltransferase E (238 aa).

Positions 85, 87, 113, 129, and 153 each coordinate S-adenosyl-L-methionine. Lys193 acts as the Proton acceptor in catalysis.

The protein belongs to the class I-like SAM-binding methyltransferase superfamily. RNA methyltransferase RlmE family.

The protein localises to the cytoplasm. The catalysed reaction is uridine(2552) in 23S rRNA + S-adenosyl-L-methionine = 2'-O-methyluridine(2552) in 23S rRNA + S-adenosyl-L-homocysteine + H(+). Its function is as follows. Specifically methylates the uridine in position 2552 of 23S rRNA at the 2'-O position of the ribose in the fully assembled 50S ribosomal subunit. The chain is Ribosomal RNA large subunit methyltransferase E from Ruegeria sp. (strain TM1040) (Silicibacter sp.).